The primary structure comprises 93 residues: Neurophysin 1 (93 aa).

7 cysteine pairs are disulfide-bonded: Cys10-Cys54, Cys13-Cys27, Cys21-Cys44, Cys28-Cys34, Cys61-Cys74, Cys68-Cys86, and Cys75-Cys80.

Belongs to the vasopressin/oxytocin family.

The protein localises to the secreted. Functionally, neurophysin 1 specifically binds oxytocin. The protein is Neurophysin 1 of Anser anser anser (Western greylag goose).